Reading from the N-terminus, the 87-residue chain is Large ribosomal subunit protein bL31B (87 aa).

The protein belongs to the bacterial ribosomal protein bL31 family. Type B subfamily. As to quaternary structure, part of the 50S ribosomal subunit.

The chain is Large ribosomal subunit protein bL31B from Pseudomonas aeruginosa (strain LESB58).